Consider the following 437-residue polypeptide: Trypacidin cluster transcriptional coactivator tpcD (437 aa).

Residues 75–144 enclose the HTH iclR-type domain; the sequence is LAVQSQLLSC…PQRGHVAHSP (70 aa). A DNA-binding region (H-T-H motif) is located at residues 105–124; that stretch reads IADLARLSGVPEAQLARIIR.

Specifically expressed in conidia.

The protein resides in the nucleus. Its function is as follows. Transcriptional coactivator; part of the gene cluster that mediates the biosynthesis of trypacidin, a mycotoxin with antiprotozoal activity and that plays a role in the infection process. With tpcE, coregulates the production of trypacidin. In Aspergillus fumigatus (strain ATCC MYA-4609 / CBS 101355 / FGSC A1100 / Af293) (Neosartorya fumigata), this protein is Trypacidin cluster transcriptional coactivator tpcD.